The primary structure comprises 485 residues: Adenosylhomocysteinase (485 aa).

Positions 64, 139, and 205 each coordinate substrate. 206 to 208 (TTT) lines the NAD(+) pocket. Lysine 235 and aspartate 239 together coordinate substrate. NAD(+) contacts are provided by residues asparagine 240, 269 to 274 (GYGDVG), glutamate 292, asparagine 327, 348 to 350 (IGH), and asparagine 397.

Belongs to the adenosylhomocysteinase family. It depends on NAD(+) as a cofactor.

It catalyses the reaction S-adenosyl-L-homocysteine + H2O = L-homocysteine + adenosine. It functions in the pathway amino-acid biosynthesis; L-homocysteine biosynthesis; L-homocysteine from S-adenosyl-L-homocysteine: step 1/1. Its function is as follows. Adenosylhomocysteine is a competitive inhibitor of S-adenosyl-L-methionine-dependent methyl transferase reactions; therefore adenosylhomocysteinase may play a key role in the control of methylations via regulation of the intracellular concentration of adenosylhomocysteine. This Lupinus luteus (European yellow lupine) protein is Adenosylhomocysteinase (SAHH).